The primary structure comprises 495 residues: Tubulin epsilon and delta complex protein 1 (495 aa).

A coiled-coil region spans residues 355–387 (GGELDLVVRELQALEEELREAAERRRAAWEAKA). The segment at 417 to 440 (CWERDGGPAQPHGPHRLVRREDGA) is disordered. Positions 452–480 (IRTLRSQEACLEAVLRRLQGQCRQELARL) form a coiled coil.

In terms of assembly, interacts with TEDC2. Found in a complex with TEDC1, TEDC2, TUBE1 and TUBD1.

The protein resides in the cell projection. The protein localises to the cilium. It is found in the cytoplasm. Its subcellular location is the cytoskeleton. It localises to the microtubule organizing center. The protein resides in the centrosome. The protein localises to the centriole. Functionally, acts as a positive regulator of ciliary hedgehog signaling. Required for centriole stability. May play a role in counteracting perturbation of actin filaments, such as after treatment with the actin depolymerizing microbial metabolite Chivosazole F. This is Tubulin epsilon and delta complex protein 1 from Homo sapiens (Human).